The following is a 315-amino-acid chain: L-lactate dehydrogenase (315 aa).

Residues V12, D33, and Y65 each contribute to the NAD(+) site. Residues Q82, R88, and 120-123 (NPVD) contribute to the substrate site. NAD(+) contacts are provided by residues 118 to 120 (ISN) and S143. Residue 148-151 (DTSR) coordinates substrate. Beta-D-fructose 1,6-bisphosphate-binding residues include R153 and H168. The active-site Proton acceptor is H175. The residue at position 219 (Y219) is a Phosphotyrosine. Position 228 (T228) interacts with substrate.

The protein belongs to the LDH/MDH superfamily. LDH family. In terms of assembly, homotetramer.

It localises to the cytoplasm. The enzyme catalyses (S)-lactate + NAD(+) = pyruvate + NADH + H(+). Its pathway is fermentation; pyruvate fermentation to lactate; (S)-lactate from pyruvate: step 1/1. Allosterically activated by fructose 1,6-bisphosphate (FBP). Its function is as follows. Catalyzes the conversion of lactate to pyruvate. The chain is L-lactate dehydrogenase from Mycoplasmopsis pulmonis (strain UAB CTIP) (Mycoplasma pulmonis).